A 218-amino-acid polypeptide reads, in one-letter code: 1-Cys peroxiredoxin PER1 (218 aa).

Residues 4–164 (LTIGDTVPNL…VVRAVDSLLT (161 aa)) form the Thioredoxin domain. The Cysteine sulfenic acid (-SOH) intermediate role is filled by cysteine 46. A Bipartite nuclear localization signal motif is present at residues 194–217 (KKMFPQGFETADLPSKKGYLRFTK).

This sequence belongs to the peroxiredoxin family. Prx6 subfamily. In terms of tissue distribution, embryo and aleurone cells.

It is found in the nucleus. The protein resides in the cytoplasm. The enzyme catalyses a hydroperoxide + [thioredoxin]-dithiol = an alcohol + [thioredoxin]-disulfide + H2O. Functionally, thiol-specific peroxidase that catalyzes the reduction of hydrogen peroxide and organic hydroperoxides to water and alcohols, respectively. Seems to contribute to the inhibition of germination during stress. This chain is 1-Cys peroxiredoxin PER1 (PER1), found in Hordeum vulgare (Barley).